We begin with the raw amino-acid sequence, 267 residues long: Cilia- and flagella-associated protein 300 (267 aa).

It belongs to the CFAP300 family. In terms of assembly, interacts with DNAAF2.

It is found in the cytoplasm. The protein resides in the cytoskeleton. The protein localises to the cilium axoneme. Its function is as follows. Cilium- and flagellum-specific protein that plays a role in axonemal structure organization and motility. May play a role in outer and inner dynein arm assembly. This is Cilia- and flagella-associated protein 300 from Bos taurus (Bovine).